A 296-amino-acid chain; its full sequence is Antisense-enhancing sequence 1 (296 aa).

Glu-47 is a catalytic residue.

It belongs to the PhzF family.

May have isomerase activity. Enhances target gene silencing when coexpressed with antisense RNA. The sequence is that of Antisense-enhancing sequence 1 (aes1) from Schizosaccharomyces pombe (strain 972 / ATCC 24843) (Fission yeast).